A 509-amino-acid polypeptide reads, in one-letter code: uncharacterized protein (509 aa).

This sequence belongs to the MG032/MG096/MG288 family.

This is an uncharacterized protein from Mycoplasma pneumoniae (strain ATCC 29342 / M129 / Subtype 1) (Mycoplasmoides pneumoniae).